A 281-amino-acid chain; its full sequence is Microtubule-associated protein RP/EB family member 3 (281 aa).

Positions 14–116 constitute a Calponin-homology (CH) domain; the sequence is NLSRHDMLAW…FIQWFKKFFD (103 aa). Disordered stretches follow at residues 157-181 and 260-281; these read VPQR…VAPP and EGFA…QDEY. A compositionally biased stretch (polar residues) spans 158–175; sequence PQRTSPTGPKNMQTSGRL. Phosphoserine occurs at positions 162 and 176. Residues 194 to 264 form the EB1 C-terminal domain; sequence GGHEADAQIL…LYATEEGFAP (71 aa). Residues 217 to 260 are APC-binding; it reads DGLEKERDFYFSKLRDIELICQEHESENSPVISGIIGILYATEE. Positions 217–281 are DCTN1-binding; that stretch reads DGLEKERDFY…EHQQEDQDEY (65 aa). Positions 272–281 are enriched in basic and acidic residues; the sequence is EHQQEDQDEY.

This sequence belongs to the MAPRE family. Homodimer. Heterodimer with MAPRE1. Binds monomeric and polymerized GTP-bound tubulin. Interacts with DCTN1 and SRCIN1. Binds to the C-terminal domain of APC. Interacts (via C-terminus) with CLIP1. Interacts with SLAIN2. Interacts with SLAIN1. Interacts with APC2. Interacts with AKAP9. Interacts with PDE4DIP isoform 2/MMG8/SMYLE; this interaction is required for its recruitment to the Golgi apparatus.

It localises to the cytoplasm. Its subcellular location is the cytoskeleton. In terms of biological role, plus-end tracking protein (+TIP) that binds to the plus-end of microtubules and regulates the dynamics of the microtubule cytoskeleton. Promotes microtubule growth. May be involved in spindle function by stabilizing microtubules and anchoring them at centrosomes. Also acts as a regulator of minus-end microtubule organization: interacts with the complex formed by AKAP9 and PDE4DIP, leading to recruit CAMSAP2 to the Golgi apparatus, thereby tethering non-centrosomal minus-end microtubules to the Golgi, an important step for polarized cell movement. Promotes elongation of CAMSAP2-decorated microtubule stretches on the minus-end of microtubules. In Mus musculus (Mouse), this protein is Microtubule-associated protein RP/EB family member 3 (Mapre3).